A 352-amino-acid polypeptide reads, in one-letter code: Histidine biosynthesis bifunctional protein HisB (352 aa).

A histidinol-phosphatase region spans residues Met-1–Phe-164. The active-site Nucleophile is the Asp-9. Positions 9 and 11 each coordinate Mg(2+). Catalysis depends on Asp-11, which acts as the Proton donor. Zn(2+)-binding residues include Cys-93, His-95, Cys-101, and Cys-103. Asp-130 contacts Mg(2+). The segment at Arg-165–Ile-352 is imidazoleglycerol-phosphate dehydratase.

In the N-terminal section; belongs to the histidinol-phosphatase family. The protein in the C-terminal section; belongs to the imidazoleglycerol-phosphate dehydratase family. Mg(2+) is required as a cofactor. It depends on Zn(2+) as a cofactor.

Its subcellular location is the cytoplasm. The catalysed reaction is D-erythro-1-(imidazol-4-yl)glycerol 3-phosphate = 3-(imidazol-4-yl)-2-oxopropyl phosphate + H2O. The enzyme catalyses L-histidinol phosphate + H2O = L-histidinol + phosphate. It participates in amino-acid biosynthesis; L-histidine biosynthesis; L-histidine from 5-phospho-alpha-D-ribose 1-diphosphate: step 6/9. It functions in the pathway amino-acid biosynthesis; L-histidine biosynthesis; L-histidine from 5-phospho-alpha-D-ribose 1-diphosphate: step 8/9. The sequence is that of Histidine biosynthesis bifunctional protein HisB from Campylobacter jejuni subsp. jejuni serotype O:23/36 (strain 81-176).